The primary structure comprises 900 residues: Alanine--tRNA ligase (900 aa).

The Zn(2+) site is built by histidine 568, histidine 572, cysteine 672, and histidine 676.

This sequence belongs to the class-II aminoacyl-tRNA synthetase family. Zn(2+) is required as a cofactor.

Its subcellular location is the cytoplasm. The catalysed reaction is tRNA(Ala) + L-alanine + ATP = L-alanyl-tRNA(Ala) + AMP + diphosphate. Functionally, catalyzes the attachment of alanine to tRNA(Ala) in a two-step reaction: alanine is first activated by ATP to form Ala-AMP and then transferred to the acceptor end of tRNA(Ala). Also edits incorrectly charged Ser-tRNA(Ala) and Gly-tRNA(Ala) via its editing domain. This chain is Alanine--tRNA ligase, found in Mycoplasma genitalium (strain ATCC 33530 / DSM 19775 / NCTC 10195 / G37) (Mycoplasmoides genitalium).